We begin with the raw amino-acid sequence, 1918 residues long: MAHLKLDTLHVQRSPRGSRRSSPSSGRSSACSSGSISPVPIIPIISISHDGDESESESEIETEPVRLFQRRMSTKCTNNLAAIIKEGFLLKHTWSFQRWRRRYFRLKRNMLFYAKDEKCDVFDDIDLSDLCYFECGIKNVNHSFQIITPTRSLVLCAESRREMEDWLGGLKTATAPQRPRGDSFLIEQHDILSNHHHWYATSHARPTYCNVCRDALSGVTSHGLSCEVCKCKVHKRCAAKSIANCKWTTLASVGKDIIEQADGSIIMPHQWMEGNLPVSSMCAVCKKTCGSVLRLQDWRCLWCRATVHVACRPQMAVACPIGPAKLSVVPPTSVHSISTDDAWDVASPKGNFSPLLVFVNSKSGDNQGVKFLRRFKQLLNPAQVFDLISTGPSLGLRLFRHFEMFRILVCSGDGSVGWVLSEIDRFNMHKQCQVAVMPLGTGNDLARVLGWGSSCDDDTHLPQILERYESASTKMLDRWSIMVFEKAIPVPKTPKMSISTEQEAMLTGMVTSANHHLRFIVETNDTQTLISSTRNLCDTVDDLVCRISEHHKEDEQLAVKCDILRQKLNMLLDALQEEEIGAHSGDDLIATIRSLITRSIPVTPGSNAYLLNPNISIEKTEKDQINTKERRNSRSLRSSEKEALQCRANSVKRAIYNVVEHSEPGRPKRYQRKLSITPFEALKLPTTASGESTPCTSPLPIIPPINIISPTMETSRLTCISPLPDTRRDSVDENFFNSINLPAPRQFADSRRSSGVPEVIQEIEEGANGETVYRRSRMSLTGGANIDDAGNRLSPCSDGGENTPTERKVDFLRVPIHTGEPIVDPLCDYRPHEVFERTYYMTREMDKDKEKDKEKEKEKTAEIEEENDKCVEKLGSIPAEKLVHTCNLQVPGVVVTPNPQNVYSSASITIIDTDAQTTTEQSSSDDLGGEASDVLSAISNEECSVASEIFDKQDAGQTVGDIIQNMDASNFTHIDSPETSDETEAMPGESLMDDISSVLGHDITYALQDNTLTDDTTTLCSEHAGPPKPPRKKSLSALSRTQAHPRRRNSSPPRTARLARMDSDDNPQQFGFENIVFEIDNRCDDQKMREPPRYCSLAQFVEGNDIARQSFKQLMLEQHRGGDNDIESPEQQQAPTNKGAHLLATTSEDELSTQTAIKIEIHDIDATVRSINSSMKPNTILTTSTSPTKKSGHGQDISVVVRPPTPLRGDSIKPTVSLLPVSSGGAMAVSMTCSGMLGVRAMNASEIRRHSSHAPSLAVREFDKDKDRRHSGFNPNQLTLDPEHARFLSSSPAASRRISCGSLFKKKNKKIATKRSYGLFSVRFFVVAEPDFRLATLALIRPLIPLPNEALPNLQTLKGSKSSLFMGSTLFGFDHLASAERDKEERGGKDKDKTPTEEANRKLPIINPLVRLPNWPNLANGGGFISKCLLANADTLCAAVSPLMDPDETLLAGYHEKCVMNNYFGIGIDAKISLDFHNKREEHPEKCRSRARNYMWYGVLGSKQLLQKTCKNLEQRVQLECDGQRIPLPELQGIVILNIPSFMGGTNFWGSSTKKDDIFLPPSFDDRVLEVVAVFGSVQMAASRLINLQHHRIAQCQSVQINILGDEEIPIQVDGEAWLQPPGMIRILHKNRVQMLCRNRSLELSLKSWHEKQRQHSISIQRDASSTASEHANSTDEVISERECYVLLNFIEAVSSLVKWVKFLIISHPALQHDLYEVACRASEALESIHPQGKLLEGPSLRTKLVEVIDSSRQLYDDACTLLRDRGHSLILREDLETKLSAALANMEMELKKCSVQKCIDGKLRAYFNVLAPNEESDGRRKSRPFWVRLRSGSTAGQQVFKPPLTNTREAANNWSVNEVVTWLETMQLSEYVDSFLKNDIRGKELLTLGRRDLKDLGVVKVGHVKRILQAIKDLSEN.

Residues 1–10 show a composition bias toward basic and acidic residues; that stretch reads MAHLKLDTLH. Residues 1 to 37 form a disordered region; the sequence is MAHLKLDTLHVQRSPRGSRRSSPSSGRSSACSSGSIS. Positions 20 to 37 are enriched in low complexity; it reads RSSPSSGRSSACSSGSIS. The PH domain maps to 82-175; sequence AIIKEGFLLK…WLGGLKTATA (94 aa). Phorbol-ester/DAG-type zinc fingers lie at residues 195 to 245 and 268 to 319; these read HHHW…IANC and PHQW…AVAC. The 137-residue stretch at 350–486 folds into the DAGKc domain; that stretch reads GNFSPLLVFV…DRWSIMVFEK (137 aa). Disordered regions lie at residues 783–805, 1017–1067, 1177–1212, and 1380–1399; these read GANI…NTPT, TTLC…DDNP, PNTI…GDSI, and ERDK…TEEA. A compositionally biased stretch (polar residues) spans 1177–1189; that stretch reads PNTILTTSTSPTK. An SAM domain is found at 1855-1918; it reads WSVNEVVTWL…LQAIKDLSEN (64 aa).

The protein belongs to the eukaryotic diacylglycerol kinase family.

It is found in the cytoplasm. The enzyme catalyses a 1,2-diacyl-sn-glycerol + ATP = a 1,2-diacyl-sn-glycero-3-phosphate + ADP + H(+). Functionally, phosphorylates diacylglycerol (DAG) to generate phosphatidic acid (PA). The sequence is that of Diacylglycerol kinase eta from Drosophila erecta (Fruit fly).